The chain runs to 484 residues: Nuclear rim protein 1 (484 aa).

Phosphoserine is present on S3. The next 2 helical transmembrane spans lie at 145 to 165 (FTIF…MFGY) and 252 to 272 (TAIV…AIVF). A disordered region spans residues 416–457 (SSNENLEKGGAYLPNQDQNRPSKSLSPLRKTPLSARQKRFEG). At S417 the chain carries Phosphoserine. The span at 430–440 (NQDQNRPSKSL) shows a compositional bias: polar residues. S474 is modified (phosphoserine).

It belongs to the NUR1 family. In terms of assembly, interacts with CSM1.

The protein resides in the nucleus membrane. Its function is as follows. Member of a perinuclear network that controls recombination at multiple loci to maintain genome stability. Required for rDNA repeat stability. The chain is Nuclear rim protein 1 (NUR1) from Saccharomyces cerevisiae (strain ATCC 204508 / S288c) (Baker's yeast).